A 150-amino-acid polypeptide reads, in one-letter code: Viral late gene transcription factor 2 (150 aa).

Belongs to the orthopoxvirus VLTF-2/OPG126 family. Interacts with the late transcription elongation factor VLTF-4/OPG110. Interacts with the late transcription factors VLTF-1/OPG093.

Acts with RNA polymerase to initiate transcription from late gene promoters. In Monkeypox virus, this protein is Viral late gene transcription factor 2 (OPG126).